Here is a 189-residue protein sequence, read N- to C-terminus: uncharacterized protein (189 aa).

This sequence belongs to the mimivirus R457/R459 family.

It localises to the virion. This is an uncharacterized protein from Acanthamoeba polyphaga mimivirus (APMV).